The following is a 548-amino-acid chain: Rhodopsin kinase grk7-b (548 aa).

Position 33 is a phosphoserine; by PKA (serine 33). One can recognise an RGS domain in the interval 53–172 (FEDICEQQPI…QTSLFFDRFV (120 aa)). The region spanning 187–446 (FYEFRTLGKG…NDDPRKHEFF (260 aa)) is the Protein kinase domain. ATP-binding positions include 193 to 201 (LGKGGFGEV) and lysine 216. The active-site Proton acceptor is the aspartate 312. The region spanning 447–512 (KSINFPRLEA…GVVPIAWQQE (66 aa)) is the AGC-kinase C-terminal domain. The interval 520-548 (DELSDPNRKESAAGLEDEEQQKSKSCTLL) is disordered. Residue cysteine 545 is modified to Cysteine methyl ester. A lipid anchor (S-geranylgeranyl cysteine) is attached at cysteine 545. The propeptide at 546 to 548 (TLL) is removed in mature form.

The protein belongs to the protein kinase superfamily. AGC Ser/Thr protein kinase family. GPRK subfamily. Phosphorylation at Ser-33 is regulated by light and activated by cAMP. In terms of tissue distribution, expressed in the eyes (at protein level). Expressed in the eyes, the pineal gland and in the brain.

The protein resides in the membrane. It carries out the reaction L-threonyl-[rhodopsin] + ATP = O-phospho-L-threonyl-[rhodopsin] + ADP + H(+). The catalysed reaction is L-seryl-[rhodopsin] + ATP = O-phospho-L-seryl-[rhodopsin] + ADP + H(+). In terms of biological role, retina-specific kinase involved in the shutoff of the photoresponse and adaptation to changing light conditions via cone opsin phosphorylation, including rhodopsin (RHO). The protein is Rhodopsin kinase grk7-b (grk7b) of Danio rerio (Zebrafish).